We begin with the raw amino-acid sequence, 215 residues long: Nascent polypeptide-associated complex subunit alpha (215 aa).

A disordered region spans residues 1–82 (MPGEATETVP…EKKARKAMSK (82 aa)). The segment covering 9 to 28 (VPVTEQEMQQPQAETGSGTE) has biased composition (polar residues). Residues 29 to 42 (SDSDESVPDLEEGD) are compositionally biased toward acidic residues. Residues 44–57 (AQTQTQQAQLAAAA) show a composition bias toward low complexity. One can recognise an NAC-A/B domain in the interval 70–135 (SRSEKKARKA…AKIEDLSQQA (66 aa)). Residue S166 is modified to Phosphoserine. The UBA domain maps to 176–213 (VEVKDIELVMSQANVSRAKAVRALKNNNNDIVNAIMEL).

Belongs to the NAC-alpha family.

In terms of biological role, may promote appropriate targeting of ribosome-nascent polypeptide complexes. The protein is Nascent polypeptide-associated complex subunit alpha (naca) of Danio rerio (Zebrafish).